The chain runs to 165 residues: Cytochrome b6-f complex subunit 4 (165 aa).

3 helical membrane-spanning segments follow: residues 36–56 (LLYIFPVVILGTIACNVGLAV), 95–115 (LLGVLLMVSVPAGLLTVPFLE), and 131–151 (TVFLIGTVVALWLGIGATLPI).

Belongs to the cytochrome b family. PetD subfamily. In terms of assembly, the 4 large subunits of the cytochrome b6-f complex are cytochrome b6, subunit IV (17 kDa polypeptide, petD), cytochrome f and the Rieske protein, while the 4 small subunits are petG, petL, petM and petN. The complex functions as a dimer.

It localises to the plastid. Its subcellular location is the chloroplast thylakoid membrane. Functionally, component of the cytochrome b6-f complex, which mediates electron transfer between photosystem II (PSII) and photosystem I (PSI), cyclic electron flow around PSI, and state transitions. This Populus alba (White poplar) protein is Cytochrome b6-f complex subunit 4.